A 241-amino-acid polypeptide reads, in one-letter code: DNA repair protein RecO (241 aa).

Belongs to the RecO family.

Its function is as follows. Involved in DNA repair and RecF pathway recombination. This is DNA repair protein RecO from Yersinia pseudotuberculosis serotype O:1b (strain IP 31758).